The sequence spans 78 residues: MLKRSKFETTQSQIMHRAEDLISAASNRYRITVQVANRAKRRRYEEFESAEDSMMKPVLRAIIEMSDELTQPEIIGEI.

The protein belongs to the RNA polymerase subunit omega family. In terms of assembly, in cyanobacteria the RNAP catalytic core is composed of 2 alpha, 1 beta, 1 beta', 1 gamma and 1 omega subunit. When a sigma factor is associated with the core the holoenzyme is formed, which can initiate transcription.

It catalyses the reaction RNA(n) + a ribonucleoside 5'-triphosphate = RNA(n+1) + diphosphate. Its function is as follows. Promotes RNA polymerase assembly. Latches the N- and C-terminal regions of the beta' subunit thereby facilitating its interaction with the beta and alpha subunits. The polypeptide is DNA-directed RNA polymerase subunit omega (Trichormus variabilis (strain ATCC 29413 / PCC 7937) (Anabaena variabilis)).